A 276-amino-acid polypeptide reads, in one-letter code: Aurora kinase C (276 aa).

The Protein kinase domain maps to 16–266; sequence FEIGRPLGRG…LAQVLKHPWV (251 aa). ATP is bound by residues 22 to 30 and Lys-45; that span reads LGRGKFGRV. Asp-139 acts as the Proton acceptor in catalysis. Residue Thr-171 is modified to Phosphothreonine; by PKA.

It belongs to the protein kinase superfamily. Ser/Thr protein kinase family. Aurora subfamily. Component of the chromosomal passenger complex (CPC) composed of at least BIRC5/survivin, CDCA8/borealin, INCENP, AURKB or AURKC; predominantly independent AURKB- and AURKC-containing complexes exist; in the complex interacts directly with BIRC5/survivin and INCENP. Interacts with TACC1. Expressed only in testis.

The protein resides in the nucleus. It is found in the chromosome. Its subcellular location is the centromere. The protein localises to the cytoplasm. It localises to the cytoskeleton. The protein resides in the spindle. The catalysed reaction is L-seryl-[protein] + ATP = O-phospho-L-seryl-[protein] + ADP + H(+). The enzyme catalyses L-threonyl-[protein] + ATP = O-phospho-L-threonyl-[protein] + ADP + H(+). Its activity is regulated as follows. Okadaic acid, an inhibitor of protein phosphatase 1 (PP1), protein phosphatase 2A (PP2A) and protein phosphatase 5 (PP5), increases AURKC activity. AURKC is also stabilized through its interaction with INCENP, which also acts as an activator. In terms of biological role, serine/threonine-protein kinase component of the chromosomal passenger complex (CPC), a complex that acts as a key regulator of mitosis. The CPC complex has essential functions at the centromere in ensuring correct chromosome alignment and segregation and is required for chromatin-induced microtubule stabilization and spindle assembly. Also plays a role in meiosis and more particularly in spermatogenesis. Has redundant cellular functions with AURKB and can rescue an AURKB knockdown. Like AURKB, AURKC phosphorylates histone H3 at 'Ser-10' and 'Ser-28'. AURKC phosphorylates the CPC complex subunits BIRC5/survivin and INCENP leading to increased AURKC activity. Phosphorylates TACC1, another protein involved in cell division, at 'Ser-228'. The protein is Aurora kinase C (Aurkc) of Mus musculus (Mouse).